Here is a 476-residue protein sequence, read N- to C-terminus: MSGPTWLPPKQPEPARAPQGRAIPRGTPGPPPAHGAALQPHPRVNFCPLPSEQCYQAPGGPEDRGPAWVGSHGVLQHTQGLPADRGGLRPGSLDAEIDLLSSTLAELNGGRGHASRRPDRQAYEPPPPPAYRTGSLKPNPASPLPASPYGGPTPASYTTASTPAGPAFPVQVKVAQPVRGCGPPRRGASQASGPLPGPHFPLPGRGEVWGPGYRSQREPGPGAKEEAAGVSGPAGRGRGGEHGPQVPLSQPPEDELDRLTKKLVHDMNHPPSGEYFGQCGGCGEDVVGDGAGVVALDRVFHVGCFVCSTCRAQLRGQHFYAVERRAYCEGCYVATLEKCATCSQPILDRILRAMGKAYHPGCFTCVVCHRGLDGIPFTVDATSQIHCIEDFHRKFAPRCSVCGGAIMPEPGQEETVRIVALDRSFHIGCYKCEECGLLLSSEGECQGCYPLDGHILCKACSAWRIQELSATVTTDC.

The segment covering 1–12 (MSGPTWLPPKQP) has biased composition (pro residues). Disordered regions lie at residues 1 to 93 (MSGP…PGSL) and 108 to 253 (NGGR…QPPE). An Asymmetric dimethylarginine; alternate modification is found at R25. At R25 the chain carries Omega-N-methylarginine; alternate. Position 55 is a phosphotyrosine; by SRC (Y55). A Phosphoserine modification is found at S92. R111 carries the post-translational modification Omega-N-methylarginine. S142 carries the phosphoserine modification. Residues 152-167 (PTPASYTTASTPAGPA) show a composition bias toward low complexity. Omega-N-methylarginine occurs at positions 179 and 186. A Phosphoserine modification is found at S189. Residues R205, R236, and R238 each carry the omega-N-methylarginine modification. S249 carries the post-translational modification Phosphoserine. LIM zinc-binding domains follow at residues 279–316 (CGGCGEDVVGDGAGVVALDRVFHVGCFVCSTCRAQLRG), 339–398 (CATC…FAPR), and 399–467 (CSVC…RIQE). Positions 469 to 476 (SATVTTDC) are interaction with MAGI1 and PTPN13.

The protein belongs to the zyxin/ajuba family. Specifically interacts with the ligand binding domain of the thyroid receptor (TR) in the presence of thyroid hormone. Interacts (via the third LIM domain and C-terminus) with PTPN13 (via the second PDZ domain). Interacts (via the second LIM domain or via the third LIM domain plus C-terminus) with PDLIM4 (via PDZ domain). Found in a complex with PTPN13 and PDLIM4. Interacts with SVIL isoform 2. Interacts with LPAR2 but not other LPA receptors. Interacts with PRKAA2. Interacts with MAGI1. Interacts with SCRIB. In case of infection, interacts with S.typhimurium protein sseI. Phosphorylation at Tyr-55 by SRC is required for enhancement of lysophosphatidic acid-induced cell migration. Tyr-55 is dephosphorylated by PTPN13. Abundantly expressed in kidney, liver and lung. Lower levels in heart, placenta and pancreas. Expressed in colonic epithelial cells. Up-regulated in colonic tumors.

It is found in the cytoplasm. Its subcellular location is the cytoskeleton. The protein localises to the cell junction. It localises to the focal adhesion. The protein resides in the nucleus. Functionally, relays signals from the cell surface to the nucleus to weaken adherens junction and promote actin cytoskeleton reorganization and cell invasiveness. Involved in lysophosphatidic acid-induced cell adhesion and migration. Acts as a transcriptional coactivator for NF-kappa-B and JUN, and mediates the transrepression of these transcription factors induced by glucocorticoid receptor. In Homo sapiens (Human), this protein is Thyroid receptor-interacting protein 6 (TRIP6).